Reading from the N-terminus, the 260-residue chain is Winged helix repair factor 1 (260 aa).

Winged helix domain stretches follow at residues 38 to 110 (FTED…MVVM), 126 to 185 (SRAT…LAVP), and 186 to 260 (GAGR…ISET).

Belongs to the STK19 family. In terms of assembly, monomer in solution. Homodimer; when bound to DNA. Component of a transcription-coupled nucleotide excision repair (TC-NER) complex which assembles and interacts with the multiprotein RNA polymerase II complex when it stalls at DNA lesions.

Its subcellular location is the nucleus. Its function is as follows. DNA-binding protein which is required for efficient transcription-coupled nucleotide excision repair (TC-NER). Acts as part of a TC-NER complex which assembles and interacts with RNA polymerase II (RNAPII) when it stalls at DNA lesions. The chain is Winged helix repair factor 1 from Xenopus laevis (African clawed frog).